A 312-amino-acid chain; its full sequence is Malate dehydrogenase (312 aa).

NAD(+) contacts are provided by residues 7-13 (GAAGGIG) and D34. Residues R81 and R87 each coordinate substrate. Residues N94 and 117–119 (ITN) each bind NAD(+). Residues N119 and R153 each contribute to the substrate site. H177 serves as the catalytic Proton acceptor. M227 serves as a coordination point for NAD(+).

This sequence belongs to the LDH/MDH superfamily. MDH type 1 family. As to quaternary structure, homodimer.

It catalyses the reaction (S)-malate + NAD(+) = oxaloacetate + NADH + H(+). In terms of biological role, catalyzes the reversible oxidation of malate to oxaloacetate. This Shigella dysenteriae serotype 1 (strain Sd197) protein is Malate dehydrogenase.